Reading from the N-terminus, the 1473-residue chain is G8 domain-containing protein DDB_G0286311 (1473 aa).

An N-terminal signal peptide occupies residues 1–21 (MKRFFIVILFILLVCIFNVKS). Residues 105–125 (IVLMIATITGSLLFIRFNIGF) traverse the membrane as a helical segment. Asn126 carries N-linked (GlcNAc...) asparagine glycosylation. Residues 130-150 (TLIILIIGTIFLIGSSHSITL) traverse the membrane as a helical segment. Asn203, Asn241, and Asn275 each carry an N-linked (GlcNAc...) asparagine glycan. Residues 298–375 (TGTTPTTTPT…PTTTPTTTPT (78 aa)) show a composition bias toward low complexity. A disordered region spans residues 298–400 (TGTTPTTTPT…SSSPSSPSFS (103 aa)). A compositionally biased stretch (polar residues) spans 376 to 389 (DSCPTTSTWRPTMA). Residues 390–400 (SSSSPSSPSFS) show a composition bias toward low complexity. Asn444, Asn637, Asn680, Asn1078, Asn1088, Asn1176, Asn1206, Asn1225, Asn1389, and Asn1424 each carry an N-linked (GlcNAc...) asparagine glycan. The 129-residue stretch at 626-754 (SIWSSGIVPL…YHNTWSKLST (129 aa)) folds into the G8 domain.

Belongs to the comF family.

The protein localises to the membrane. The chain is G8 domain-containing protein DDB_G0286311 from Dictyostelium discoideum (Social amoeba).